The sequence spans 245 residues: MTFTASSSSCAITESPVVVALDYHERDKALAFVDKIDPRDCRLKVGKEMFTLFGPQLVRDLQQRGFDVFLDLKFHDIPNTTARAVAAAADLGVWMVNVHASGGARMMAAARDALAPFSKDAPLLIAVTVLTSMETSDLHDLGVTLSPAEHAERLARLTQQCGLDGVVCSAQEAVRFKQAFGAAFKLVTPGIRPAGSEAGDQRRIMTPEQALSAGVDYMVIGRPVTQSVDPAQTLKDINASLKREA.

Substrate contacts are provided by residues D22, K44, 71 to 80 (DLKFHDIPNT), T131, R192, Q201, G221, and R222. The Proton donor role is filled by K73.

This sequence belongs to the OMP decarboxylase family. Type 1 subfamily. As to quaternary structure, homodimer.

The catalysed reaction is orotidine 5'-phosphate + H(+) = UMP + CO2. The protein operates within pyrimidine metabolism; UMP biosynthesis via de novo pathway; UMP from orotate: step 2/2. In terms of biological role, catalyzes the decarboxylation of orotidine 5'-monophosphate (OMP) to uridine 5'-monophosphate (UMP). In Salmonella typhimurium (strain LT2 / SGSC1412 / ATCC 700720), this protein is Orotidine 5'-phosphate decarboxylase.